Consider the following 190-residue polypeptide: Bifunctional protein PyrR (190 aa).

Residues 112–124 carry the PRPP-binding motif; that stretch reads VILVDDVLYSGRS.

This sequence belongs to the purine/pyrimidine phosphoribosyltransferase family. PyrR subfamily.

It catalyses the reaction UMP + diphosphate = 5-phospho-alpha-D-ribose 1-diphosphate + uracil. In terms of biological role, regulates the transcription of the pyrimidine nucleotide (pyr) operon in response to exogenous pyrimidines. Also displays a weak uracil phosphoribosyltransferase activity which is not physiologically significant. The sequence is that of Bifunctional protein PyrR from Mycolicibacterium paratuberculosis (strain ATCC BAA-968 / K-10) (Mycobacterium paratuberculosis).